Reading from the N-terminus, the 455-residue chain is MTKRNAIILAAGKGTRMRSKLYKVLHQVCGKTMVEHVLTQLEKAKIDNIITIVGFGAETVEQQLGHRTKYALQEQQLGTGHAVMQTKDLLANEDGETIIVSGDTPLFTAETFEKLFEYHEQRHAAATILTSIAPDPTGYGRIVRNDVGIVERIVEQKDATVQEQAIKEINTGVYCFDNKKLFAALSKITNDNAQGEYYLTDVIGILKQENEIVTAYKMDNFDESMGVNDRVALARANKVMRNRINTHWMREGVSMIDPETTYIDADVKIGRDTVIEGGVVIKGHTEIGNDCYIGAGSRITDSKIHDGVKIISSTLQEAEMHNGSDIGPNSHLRPEAEIGENVHIGNFCEVKKAYIGEGTKVGHLTYIGNATLGKDINVGCGVVFVNYDGTNKHHTNVGDHAFIGSNSNLVAPVNIAKDSFVAAGSTITDSTEQYDMAIARARQVNKENYAKKLPW.

Positions 1 to 230 are pyrophosphorylase; the sequence is MTKRNAIILA…FDESMGVNDR (230 aa). UDP-N-acetyl-alpha-D-glucosamine is bound by residues 9–12, Lys23, Gln73, 78–79, 101–103, Gly140, Glu155, Asn170, and Asn228; these read LAAG, GT, and SGD. Asp103 contributes to the Mg(2+) binding site. Asn228 serves as a coordination point for Mg(2+). Positions 231-251 are linker; sequence VALARANKVMRNRINTHWMRE. Residues 252-455 are N-acetyltransferase; it reads GVSMIDPETT…KENYAKKLPW (204 aa). Arg333 and Lys351 together coordinate UDP-N-acetyl-alpha-D-glucosamine. Residue His363 is the Proton acceptor of the active site. UDP-N-acetyl-alpha-D-glucosamine contacts are provided by Tyr366 and Asn377. Acetyl-CoA is bound by residues 386–387, Ser405, Ala423, and Arg440; that span reads NY.

In the N-terminal section; belongs to the N-acetylglucosamine-1-phosphate uridyltransferase family. It in the C-terminal section; belongs to the transferase hexapeptide repeat family. As to quaternary structure, homotrimer. Mg(2+) is required as a cofactor.

Its subcellular location is the cytoplasm. It carries out the reaction alpha-D-glucosamine 1-phosphate + acetyl-CoA = N-acetyl-alpha-D-glucosamine 1-phosphate + CoA + H(+). It catalyses the reaction N-acetyl-alpha-D-glucosamine 1-phosphate + UTP + H(+) = UDP-N-acetyl-alpha-D-glucosamine + diphosphate. It participates in nucleotide-sugar biosynthesis; UDP-N-acetyl-alpha-D-glucosamine biosynthesis; N-acetyl-alpha-D-glucosamine 1-phosphate from alpha-D-glucosamine 6-phosphate (route II): step 2/2. The protein operates within nucleotide-sugar biosynthesis; UDP-N-acetyl-alpha-D-glucosamine biosynthesis; UDP-N-acetyl-alpha-D-glucosamine from N-acetyl-alpha-D-glucosamine 1-phosphate: step 1/1. It functions in the pathway bacterial outer membrane biogenesis; LPS lipid A biosynthesis. Catalyzes the last two sequential reactions in the de novo biosynthetic pathway for UDP-N-acetylglucosamine (UDP-GlcNAc). The C-terminal domain catalyzes the transfer of acetyl group from acetyl coenzyme A to glucosamine-1-phosphate (GlcN-1-P) to produce N-acetylglucosamine-1-phosphate (GlcNAc-1-P), which is converted into UDP-GlcNAc by the transfer of uridine 5-monophosphate (from uridine 5-triphosphate), a reaction catalyzed by the N-terminal domain. This chain is Bifunctional protein GlmU, found in Limosilactobacillus reuteri (strain DSM 20016) (Lactobacillus reuteri).